The sequence spans 117 residues: Large ribosomal subunit protein bL20 (117 aa).

This sequence belongs to the bacterial ribosomal protein bL20 family.

Functionally, binds directly to 23S ribosomal RNA and is necessary for the in vitro assembly process of the 50S ribosomal subunit. It is not involved in the protein synthesizing functions of that subunit. This is Large ribosomal subunit protein bL20 from Geotalea uraniireducens (strain Rf4) (Geobacter uraniireducens).